The primary structure comprises 296 residues: Probable lipid kinase YegS-like (296 aa).

One can recognise a DAGKc domain in the interval 1–130; it reads MPHTLLILNG…IDLAQVNDKH (130 aa). ATP contacts are provided by residues T37, 63–69, and T92; that span reads GDGTINE. Mg(2+) is bound by residues L212, D215, and L217. The Proton acceptor role is filled by E268.

Belongs to the diacylglycerol/lipid kinase family. YegS lipid kinase subfamily. The cofactor is Mg(2+). Ca(2+) serves as cofactor.

It localises to the cytoplasm. Its function is as follows. Probably phosphorylates lipids; the in vivo substrate is unknown. The chain is Probable lipid kinase YegS-like from Yersinia enterocolitica serotype O:8 / biotype 1B (strain NCTC 13174 / 8081).